Consider the following 719-residue polypeptide: MEEVRRHHHFIKVMVGEFARRLEIPQGFLIHIPEVDHSTFDASLPSSAKGTLQNSEGKTWPVELEKLDGHVFLTTGWAKFVEDNSLREYEFLLFRYDDNMHFMVLPFGLNACEKVIRSSGSPQGKLPCDIFCCTKRGRDGDRLTEAANSLTPSHSQVLQRTTQGHELISPQSFPDQHEVCGSKDGLDEHLSLNGPMEDDKANAIAEVMSILDVDKVTVELFCAMLVFYKWNVDAVAEDFDICRGKPQIQNLFLKHKLHFQFDIVKRKLRKFFPPDDYYSSPILESRKCSLEEPKLSNQPLQCDLTTEKCRLVDEHDLCNFSQKKRRKRGSFCSPETPRRSPRLARQNNSHDSAENTLKERSEERQPSPDSMIDQAESRSEQACLCHDKTDSGSLFQDSKKVKPAHGEVDLCEEPQHNQGENEGNLDQVNNKETDEEQIERNAVETSESFTRRGCIKSSPASCEVPACLRINELSLTWKPAEHVNPLEKVLLDIQRDNFMKTISHVQGIIRNHPSDLLTADVITVVVQKEIFKWNCCLKDRDAQRIVNALLEHARKIKEMHNFNSEMRKEEFSAKLKVHLKWQLKEVETIYTSLELDYKKATSDDNIAFSMLHDKKKKLHNLQDEITGLQQSLEMKKDEMQKLAHQVAEHESVFQKSLMERLRIKEVMKGYEQTLAEVKVQLTSTEVGSIDIEALVKVEMDNMTKEIELSKESLLNITFH.

The TF-B3 DNA-binding region spans 7-110; sequence HHHFIKVMVG…HFMVLPFGLN (104 aa). Disordered stretches follow at residues 328-381 and 412-443; these read RGSF…RSEQ and EEPQ…RNAV. Over residues 351 to 366 the composition is skewed to basic and acidic residues; sequence DSAENTLKERSEERQP. Residues 416 to 430 show a composition bias toward polar residues; the sequence is HNQGENEGNLDQVNN.

Its subcellular location is the nucleus. The chain is B3 domain-containing protein Os03g0120900 from Oryza sativa subsp. japonica (Rice).